Reading from the N-terminus, the 61-residue chain is Large ribosomal subunit protein uL30 (61 aa).

Belongs to the universal ribosomal protein uL30 family. In terms of assembly, part of the 50S ribosomal subunit.

The protein is Large ribosomal subunit protein uL30 of Fervidobacterium nodosum (strain ATCC 35602 / DSM 5306 / Rt17-B1).